We begin with the raw amino-acid sequence, 312 residues long: NADH-ubiquinone oxidoreductase chain 1 (312 aa).

8 consecutive transmembrane segments (helical) span residues 3–23 (FILSLIGSLLLIICVLVSVAF), 77–97 (ISPIFSLFLSLFVWMCMPFFV), 104–124 (LGGLFFLCCTSLGVYTVMVAG), 150–170 (LALILLSFVFLIGSYNMVYFF), 174–194 (IYVWFLIILFPMALVWLTISL), 226–246 (LIFMAEYASILFMSMLFCVIF), 250–270 (DVFNLLFYVKLTFISFIFIWA), and 289–309 (CFLSFSLNYLLFFIGFKILLF).

The protein belongs to the complex I subunit 1 family.

It localises to the mitochondrion inner membrane. It catalyses the reaction a ubiquinone + NADH + 5 H(+)(in) = a ubiquinol + NAD(+) + 4 H(+)(out). In terms of biological role, core subunit of the mitochondrial membrane respiratory chain NADH dehydrogenase (Complex I) that is believed to belong to the minimal assembly required for catalysis. Complex I functions in the transfer of electrons from NADH to the respiratory chain. The immediate electron acceptor for the enzyme is believed to be ubiquinone. The polypeptide is NADH-ubiquinone oxidoreductase chain 1 (mt:ND1) (Drosophila subobscura (Fruit fly)).